The primary structure comprises 347 residues: 4-hydroxy-3-methylbut-2-en-1-yl diphosphate synthase (flavodoxin) (347 aa).

Positions 259, 262, 294, and 301 each coordinate [4Fe-4S] cluster.

This sequence belongs to the IspG family. [4Fe-4S] cluster is required as a cofactor.

The catalysed reaction is (2E)-4-hydroxy-3-methylbut-2-enyl diphosphate + oxidized [flavodoxin] + H2O + 2 H(+) = 2-C-methyl-D-erythritol 2,4-cyclic diphosphate + reduced [flavodoxin]. It participates in isoprenoid biosynthesis; isopentenyl diphosphate biosynthesis via DXP pathway; isopentenyl diphosphate from 1-deoxy-D-xylulose 5-phosphate: step 5/6. In terms of biological role, converts 2C-methyl-D-erythritol 2,4-cyclodiphosphate (ME-2,4cPP) into 1-hydroxy-2-methyl-2-(E)-butenyl 4-diphosphate. This chain is 4-hydroxy-3-methylbut-2-en-1-yl diphosphate synthase (flavodoxin), found in Caldicellulosiruptor saccharolyticus (strain ATCC 43494 / DSM 8903 / Tp8T 6331).